A 350-amino-acid chain; its full sequence is Phenylalanine--tRNA ligase alpha subunit (350 aa).

Position 260 (Glu260) interacts with Mg(2+).

It belongs to the class-II aminoacyl-tRNA synthetase family. Phe-tRNA synthetase alpha subunit type 1 subfamily. As to quaternary structure, tetramer of two alpha and two beta subunits. Mg(2+) is required as a cofactor.

Its subcellular location is the cytoplasm. It carries out the reaction tRNA(Phe) + L-phenylalanine + ATP = L-phenylalanyl-tRNA(Phe) + AMP + diphosphate + H(+). This Mesoplasma florum (strain ATCC 33453 / NBRC 100688 / NCTC 11704 / L1) (Acholeplasma florum) protein is Phenylalanine--tRNA ligase alpha subunit.